We begin with the raw amino-acid sequence, 892 residues long: Alanine--tRNA ligase (892 aa).

Zn(2+) is bound by residues H577, H581, C680, and H684.

This sequence belongs to the class-II aminoacyl-tRNA synthetase family. It depends on Zn(2+) as a cofactor.

The protein resides in the cytoplasm. The enzyme catalyses tRNA(Ala) + L-alanine + ATP = L-alanyl-tRNA(Ala) + AMP + diphosphate. Its function is as follows. Catalyzes the attachment of alanine to tRNA(Ala) in a two-step reaction: alanine is first activated by ATP to form Ala-AMP and then transferred to the acceptor end of tRNA(Ala). Also edits incorrectly charged Ser-tRNA(Ala) and Gly-tRNA(Ala) via its editing domain. In Arthrobacter sp. (strain FB24), this protein is Alanine--tRNA ligase.